The chain runs to 291 residues: Urease accessory protein UreD (291 aa).

It belongs to the UreD family. In terms of assembly, ureD, UreF and UreG form a complex that acts as a GTP-hydrolysis-dependent molecular chaperone, activating the urease apoprotein by helping to assemble the nickel containing metallocenter of UreC. The UreE protein probably delivers the nickel.

The protein localises to the cytoplasm. Required for maturation of urease via the functional incorporation of the urease nickel metallocenter. The chain is Urease accessory protein UreD from Acinetobacter baumannii (strain SDF).